The sequence spans 208 residues: Probable GTP-binding protein EngB (208 aa).

The region spanning L23–T205 is the EngB-type G domain. Residues G31–S38, G57–L61, D84–G87, T154–D157, and F182–A184 each bind GTP. The Mg(2+) site is built by S38 and T59.

This sequence belongs to the TRAFAC class TrmE-Era-EngA-EngB-Septin-like GTPase superfamily. EngB GTPase family. Mg(2+) serves as cofactor.

Necessary for normal cell division and for the maintenance of normal septation. The protein is Probable GTP-binding protein EngB of Helicobacter pylori (strain HPAG1).